Here is an 80-residue protein sequence, read N- to C-terminus: Small ribosomal subunit protein bS18 (80 aa).

The protein belongs to the bacterial ribosomal protein bS18 family. Part of the 30S ribosomal subunit. Forms a tight heterodimer with protein bS6.

Its function is as follows. Binds as a heterodimer with protein bS6 to the central domain of the 16S rRNA, where it helps stabilize the platform of the 30S subunit. This chain is Small ribosomal subunit protein bS18, found in Acholeplasma laidlawii (strain PG-8A).